We begin with the raw amino-acid sequence, 60 residues long: Large ribosomal subunit protein bL32B (60 aa).

Residues 1–19 (MAVPKRKMSRANTRHRRSQ) are compositionally biased toward basic residues. The interval 1 to 20 (MAVPKRKMSRANTRHRRSQW) is disordered.

Belongs to the bacterial ribosomal protein bL32 family.

This is Large ribosomal subunit protein bL32B from Saccharopolyspora erythraea (strain ATCC 11635 / DSM 40517 / JCM 4748 / NBRC 13426 / NCIMB 8594 / NRRL 2338).